The following is a 559-amino-acid chain: DNA ligase (559 aa).

Glu247 is an ATP binding site. Lys249 functions as the N6-AMP-lysine intermediate in the catalytic mechanism. ATP-binding residues include Arg254, Arg269, Glu299, Phe339, Arg414, and Lys420.

The protein belongs to the ATP-dependent DNA ligase family. In terms of assembly, monomer. It depends on Mg(2+) as a cofactor.

The catalysed reaction is ATP + (deoxyribonucleotide)n-3'-hydroxyl + 5'-phospho-(deoxyribonucleotide)m = (deoxyribonucleotide)n+m + AMP + diphosphate.. It carries out the reaction NAD(+) + (deoxyribonucleotide)n-3'-hydroxyl + 5'-phospho-(deoxyribonucleotide)m = (deoxyribonucleotide)n+m + AMP + beta-nicotinamide D-nucleotide.. Its function is as follows. DNA ligase that seals nicks in double-stranded DNA during DNA replication, DNA recombination and DNA repair. Can also use NAD, but less efficiently than ATP. The chain is DNA ligase from Thermococcus kodakarensis (strain ATCC BAA-918 / JCM 12380 / KOD1) (Pyrococcus kodakaraensis (strain KOD1)).